The primary structure comprises 258 residues: Phosphosulfolactate synthase (258 aa).

This sequence belongs to the phosphosulfolactate synthase family.

It carries out the reaction (2R)-O-phospho-3-sulfolactate = phosphoenolpyruvate + sulfite + H(+). It functions in the pathway cofactor biosynthesis; coenzyme M biosynthesis; sulfoacetaldehyde from phosphoenolpyruvate and sulfite: step 1/4. Functionally, catalyzes the addition of sulfite to phosphoenolpyruvate (PEP) to yield (2R)-phospho-3-sulfolactate (PSL). The sequence is that of Phosphosulfolactate synthase (comA) from Methanothermobacter thermautotrophicus (strain ATCC 29096 / DSM 1053 / JCM 10044 / NBRC 100330 / Delta H) (Methanobacterium thermoautotrophicum).